Consider the following 337-residue polypeptide: Formamidase (337 aa).

Positions 14–257 constitute a CN hydrolase domain; that stretch reads VVIGLVQLQL…DEIITAEVRP (244 aa). E60 functions as the Proton acceptor in the catalytic mechanism. K129 serves as the catalytic Proton donor. C162 functions as the Nucleophile in the catalytic mechanism.

Belongs to the carbon-nitrogen hydrolase superfamily. Aliphatic amidase family.

It carries out the reaction formamide + H2O = formate + NH4(+). Functionally, is an aliphatic amidase with a restricted substrate specificity, as it only hydrolyzes formamide. This chain is Formamidase, found in Bradyrhizobium diazoefficiens (strain JCM 10833 / BCRC 13528 / IAM 13628 / NBRC 14792 / USDA 110).